The following is an 85-amino-acid chain: Translation initiation factor IF-1 (85 aa).

The S1-like domain maps to 1–72 (MAKEELLEMR…TKARITYRFM (72 aa)).

Belongs to the IF-1 family. Component of the 30S ribosomal translation pre-initiation complex which assembles on the 30S ribosome in the order IF-2 and IF-3, IF-1 and N-formylmethionyl-tRNA(fMet); mRNA recruitment can occur at any time during PIC assembly.

It is found in the cytoplasm. Functionally, one of the essential components for the initiation of protein synthesis. Stabilizes the binding of IF-2 and IF-3 on the 30S subunit to which N-formylmethionyl-tRNA(fMet) subsequently binds. Helps modulate mRNA selection, yielding the 30S pre-initiation complex (PIC). Upon addition of the 50S ribosomal subunit IF-1, IF-2 and IF-3 are released leaving the mature 70S translation initiation complex. This is Translation initiation factor IF-1 from Erythrobacter litoralis (strain HTCC2594).